The sequence spans 244 residues: Small ribosomal subunit protein uS2 (244 aa).

Belongs to the universal ribosomal protein uS2 family.

The sequence is that of Small ribosomal subunit protein uS2 from Endomicrobium trichonymphae.